The sequence spans 105 residues: Small ribosomal subunit protein uS10 (105 aa).

Belongs to the universal ribosomal protein uS10 family. In terms of assembly, part of the 30S ribosomal subunit.

In terms of biological role, involved in the binding of tRNA to the ribosomes. The chain is Small ribosomal subunit protein uS10 from Synechocystis sp. (strain ATCC 27184 / PCC 6803 / Kazusa).